Here is a 282-residue protein sequence, read N- to C-terminus: Succinate dehydrogenase [ubiquinone] iron-sulfur subunit, mitochondrial (282 aa).

The N-terminal 30 residues, 1-30 (MAATVGVSLKRGFPAAVLGRVGLQFQACRG), are a transit peptide targeting the mitochondrion. The 2Fe-2S ferredoxin-type domain occupies 42-135 (KKFAIYRWDP…VSKIYPLPHM (94 aa)). K53 and K57 each carry N6-acetyllysine. 4 residues coordinate [2Fe-2S] cluster: C95, C100, C103, and C115. Residues 148–220 (FYAQYKSIEP…PAVLMQAYRW (73 aa)) form an interaction with SDHAF1 region. The 31-residue stretch at 178–208 (DREKLDGLYECILCACCSTSCPSYWWNGDKY) folds into the 4Fe-4S ferredoxin-type domain. Residues C188, C191, and C194 each coordinate [4Fe-4S] cluster. C198 contacts [3Fe-4S] cluster. W203 is an a ubiquinone binding site. Residues C245 and C251 each coordinate [3Fe-4S] cluster. C255 is a binding site for [4Fe-4S] cluster.

This sequence belongs to the succinate dehydrogenase/fumarate reductase iron-sulfur protein family. Component of complex II composed of four subunits: the flavoprotein (FP) SDHA, iron-sulfur protein (IP) SDHB, and a cytochrome b560 composed of SDHC and SDHD. Interacts with SDHAF1; the interaction is required for iron-sulfur cluster incorporation into SDHB. It depends on [2Fe-2S] cluster as a cofactor. [3Fe-4S] cluster serves as cofactor. Requires [4Fe-4S] cluster as cofactor.

It localises to the mitochondrion inner membrane. It carries out the reaction a quinone + succinate = fumarate + a quinol. The enzyme catalyses (R)-malate + a quinone = enol-oxaloacetate + a quinol. It catalyses the reaction (S)-malate + a quinone = enol-oxaloacetate + a quinol. It functions in the pathway carbohydrate metabolism; tricarboxylic acid cycle; fumarate from succinate (eukaryal route): step 1/1. Enol-oxaloacetate inhibits the succinate dehydrogenase activity. Functionally, iron-sulfur protein (IP) subunit of the succinate dehydrogenase complex (mitochondrial respiratory chain complex II), responsible for transferring electrons from succinate to ubiquinone (coenzyme Q). SDH also oxidizes malate to the non-canonical enol form of oxaloacetate, enol-oxaloacetate. Enol-oxaloacetate, which is a potent inhibitor of the succinate dehydrogenase activity, is further isomerized into keto-oxaloacetate. The sequence is that of Succinate dehydrogenase [ubiquinone] iron-sulfur subunit, mitochondrial (Sdhb) from Mus musculus (Mouse).